Here is a 973-residue protein sequence, read N- to C-terminus: E3 ubiquitin-protein ligase MIB2 (973 aa).

Positions 1–80 constitute an MIB/HERC2 1 domain; that stretch reads MDLDPHAGVQ…AHDLLLYDNA (80 aa). The segment at 86-138 adopts a ZZ-type zinc-finger fold; sequence HPNIICDCCKKHGLRGMRWKCRVCFDYDLCTQCYMHNKHDLTHAFERYETSHS. 8 residues coordinate Zn(2+): C91, C94, C106, C109, C115, C118, H124, and H128. In terms of domain architecture, MIB/HERC2 2 spans 149–227; that stretch reads LPRIPLRGIF…KVDLRCVGEA (79 aa). S251 carries the phosphoserine modification. 9 ANK repeats span residues 480 to 509, 513 to 542, 546 to 575, 579 to 611, 615 to 644, 649 to 679, 683 to 712, 716 to 744, and 785 to 814; these read QGRTALQVAAYLGQVELVRLLLQARASMDL, EGNTVLHYTAMGNQPEATRVLLSAGCAVDA, TRSTALHVAVQRGFLEVVKILCERGCDVNL, HADTPLHSAISAGAGASSIVEVLTEVPGIDVTA, QGFTLLHHASLKGHVLAVRKILARARQLVD, DGFTALHLAALNNHREVAQVLIREGRCDVNV, KLQSPLHLAVQQAHLGLVPLLVDAGCSVNT, EGDTALHVALQRHQLLPLVADRAGGDPGP, and RGRSPLDLATEGRVLKALQGCAQRFRERQA. 2 RING-type zinc fingers span residues 850-885 and 929-962; these read CLVCSELALLILFSPCQHRTVCEECARRMKKCIRCQ and CPICIDSHIRLVFQCGHGACAPCGAALNACPICR.

Interacts with actin monomer. Post-translationally, ubiquitinated. Possibly via autoubiquitination. Highly expressed in brain, heart, liver and kidney.

Its subcellular location is the cytoplasm. It localises to the endosome. It catalyses the reaction S-ubiquitinyl-[E2 ubiquitin-conjugating enzyme]-L-cysteine + [acceptor protein]-L-lysine = [E2 ubiquitin-conjugating enzyme]-L-cysteine + N(6)-ubiquitinyl-[acceptor protein]-L-lysine.. It functions in the pathway protein modification; protein ubiquitination. E3 ubiquitin-protein ligase that mediates ubiquitination of Delta receptors, which act as ligands of Notch proteins. Positively regulates the Delta-mediated Notch signaling by ubiquitinating the intracellular domain of Delta, leading to endocytosis of Delta receptors. This Mus musculus (Mouse) protein is E3 ubiquitin-protein ligase MIB2 (Mib2).